The chain runs to 327 residues: uncharacterized protein (327 aa).

Residues 1–19 are Cytoplasmic-facing; that stretch reads MSIAQDRGIVFKLLSIYRA. A helical transmembrane segment spans residues 20 to 40; that stretch reads AAGIFMALAQLIVIFFGYCDF. Residues 41-51 are Extracellular-facing; the sequence is KIKGYRIASYN. The helical transmembrane segment at 52–72 threads the bilayer; sequence APTFASSFIILAVCLLLVVVL. Topologically, residues 73-104 are cytoplasmic; the sequence is ENPEVKVTNSENSLFSALKQFFRVERKKLISC. The chain crosses the membrane as a helical span at residues 105 to 125; that stretch reads LILLWSMFLSSFIMSEVVYFM. The Extracellular portion of the chain corresponds to 126–141; that stretch reads PLFLTLHVNWDTKFQG. A helical membrane pass occupies residues 142–162; that stretch reads IAFMVASILGVTGSYFAPKLI. The Cytoplasmic portion of the chain corresponds to 163–199; the sequence is NVGCSCGRAKDGGLEESDTTGSETVEVKKKDSLYSGQ. The chain crosses the membrane as a helical span at residues 200–220; that stretch reads VFLSIFALFVSLLGQAFMIGA. Topologically, residues 221 to 235 are extracellular; sequence SEALKHKSMPPTNSG. A helical membrane pass occupies residues 236 to 256; sequence IFFSAGMSITLLGYNFLASSI. Topologically, residues 257–275 are cytoplasmic; sequence PALFSMYIDPKLKVQLMPS. The chain crosses the membrane as a helical span at residues 276-296; sequence IGAISGIGKLVAPIVLAALYG. At 297–300 the chain is on the extracellular side; that stretch reads TRLG. Residues 301-321 traverse the membrane as a helical segment; sequence LSIAVGFGMILVAVSIPPLIW. Topologically, residues 322–327 are cytoplasmic; it reads LRKKRC.

The protein resides in the membrane. This is an uncharacterized protein from Saccharomyces cerevisiae (strain ATCC 204508 / S288c) (Baker's yeast).